We begin with the raw amino-acid sequence, 453 residues long: Tol-Pal system protein TolB (453 aa).

The N-terminal stretch at 1–31 (MINNLSISMTKVIKIILAIIIILFNTLSIFA) is a signal peptide.

Belongs to the TolB family. The Tol-Pal system is composed of five core proteins: the inner membrane proteins TolA, TolQ and TolR, the periplasmic protein TolB and the outer membrane protein Pal. They form a network linking the inner and outer membranes and the peptidoglycan layer.

The protein resides in the periplasm. Its function is as follows. Part of the Tol-Pal system, which plays a role in outer membrane invagination during cell division and is important for maintaining outer membrane integrity. This is Tol-Pal system protein TolB from Orientia tsutsugamushi (strain Ikeda) (Rickettsia tsutsugamushi).